A 588-amino-acid polypeptide reads, in one-letter code: Phomenoic acid biosynthesis cluster cytochrome P450 monooxygenase (588 aa).

The first 21 residues, 1 to 21 (MSFARIFITILLLFILRRAFK), serve as a signal peptide directing secretion. N-linked (GlcNAc...) asparagine glycosylation is present at asparagine 293. Residues 467 to 486 (HQSDPDRFKPSPDAPDEKLF) show a composition bias toward basic and acidic residues. Positions 467-490 (HQSDPDRFKPSPDAPDEKLFRPSR) are disordered. A heme-binding site is contributed by cysteine 519.

The protein belongs to the cytochrome P450 family. Heme is required as a cofactor.

Its pathway is secondary metabolite biosynthesis. Cytochrome P450 monooxygenase; part of the gene cluster that mediates the biosynthesis of phomenoic acid, a long chain aliphatic carboxylic acid that does not appear to be essential for pathogenicity but may play a role in allowing to outcompete other fungi in the environmental niche via its antifungal properties. The polyketide synthase produces the long methylated aliphatic carboxylic acid chain of phomenoic acid. The cluster-specific cytochrome P450 monooxygenase may then hydroxylate the methyl group of carbon 31. The putative dehydrogenase YogA, which has no obvious role in phomenoic acid biosynthesis, may further modify phomenoic acid to produce a compound not identified yet. In Leptosphaeria maculans (strain JN3 / isolate v23.1.3 / race Av1-4-5-6-7-8) (Blackleg fungus), this protein is Phomenoic acid biosynthesis cluster cytochrome P450 monooxygenase.